Reading from the N-terminus, the 168-residue chain is Crossover junction endodeoxyribonuclease RuvC (168 aa).

Catalysis depends on residues D8, E68, and D140. Mg(2+)-binding residues include D8, E68, and D140.

The protein belongs to the RuvC family. In terms of assembly, homodimer which binds Holliday junction (HJ) DNA. The HJ becomes 2-fold symmetrical on binding to RuvC with unstacked arms; it has a different conformation from HJ DNA in complex with RuvA. In the full resolvosome a probable DNA-RuvA(4)-RuvB(12)-RuvC(2) complex forms which resolves the HJ. Mg(2+) serves as cofactor.

The protein localises to the cytoplasm. It catalyses the reaction Endonucleolytic cleavage at a junction such as a reciprocal single-stranded crossover between two homologous DNA duplexes (Holliday junction).. Functionally, the RuvA-RuvB-RuvC complex processes Holliday junction (HJ) DNA during genetic recombination and DNA repair. Endonuclease that resolves HJ intermediates. Cleaves cruciform DNA by making single-stranded nicks across the HJ at symmetrical positions within the homologous arms, yielding a 5'-phosphate and a 3'-hydroxyl group; requires a central core of homology in the junction. The consensus cleavage sequence is 5'-(A/T)TT(C/G)-3'. Cleavage occurs on the 3'-side of the TT dinucleotide at the point of strand exchange. HJ branch migration catalyzed by RuvA-RuvB allows RuvC to scan DNA until it finds its consensus sequence, where it cleaves and resolves the cruciform DNA. This Gluconobacter oxydans (strain 621H) (Gluconobacter suboxydans) protein is Crossover junction endodeoxyribonuclease RuvC.